Here is a 103-residue protein sequence, read N- to C-terminus: MQANDITFFQRFQEDILAGRKTITIRDAAESHFKPGDVLRVGRYEDDGYFCTIAVTATSTVTLDTLTEEHARQENMTLEQLRQVIMEIYPAEDRFYVIEFKRL.

Residues 6–100 form the ASCH domain; the sequence is ITFFQRFQED…AEDRFYVIEF (95 aa). Lysine 21 serves as the catalytic Proton acceptor. Threonine 24 functions as the Nucleophile in the catalytic mechanism. The Proton donor role is filled by glutamate 74.

It belongs to the N(4)-acetylcytidine amidohydrolase family.

It carries out the reaction N(4)-acetylcytidine + H2O = cytidine + acetate + H(+). It catalyses the reaction N(4)-acetyl-2'-deoxycytidine + H2O = 2'-deoxycytidine + acetate + H(+). The catalysed reaction is N(4)-acetylcytosine + H2O = cytosine + acetate + H(+). Its function is as follows. Catalyzes the hydrolysis of N(4)-acetylcytidine (ac4C). The protein is N(4)-acetylcytidine amidohydrolase of Klebsiella pneumoniae (strain 342).